A 509-amino-acid polypeptide reads, in one-letter code: ATP synthase subunit alpha (509 aa).

Glycine 169–threonine 176 serves as a coordination point for ATP.

This sequence belongs to the ATPase alpha/beta chains family. As to quaternary structure, F-type ATPases have 2 components, CF(1) - the catalytic core - and CF(0) - the membrane proton channel. CF(1) has five subunits: alpha(3), beta(3), gamma(1), delta(1), epsilon(1). CF(0) has three main subunits: a(1), b(2) and c(9-12). The alpha and beta chains form an alternating ring which encloses part of the gamma chain. CF(1) is attached to CF(0) by a central stalk formed by the gamma and epsilon chains, while a peripheral stalk is formed by the delta and b chains.

The protein resides in the cell inner membrane. It carries out the reaction ATP + H2O + 4 H(+)(in) = ADP + phosphate + 5 H(+)(out). In terms of biological role, produces ATP from ADP in the presence of a proton gradient across the membrane. The alpha chain is a regulatory subunit. The chain is ATP synthase subunit alpha from Rhizobium meliloti (strain 1021) (Ensifer meliloti).